Consider the following 952-residue polypeptide: Protein translocase subunit SecA (952 aa).

ATP contacts are provided by residues glutamine 104, 122-126 (GEGKT), and aspartate 512.

It belongs to the SecA family. As to quaternary structure, monomer and homodimer. Part of the essential Sec protein translocation apparatus which comprises SecA, SecYEG and auxiliary proteins SecDF. Other proteins may also be involved.

The protein resides in the cell inner membrane. It is found in the cytoplasm. It catalyses the reaction ATP + H2O + cellular proteinSide 1 = ADP + phosphate + cellular proteinSide 2.. Functionally, part of the Sec protein translocase complex. Interacts with the SecYEG preprotein conducting channel. Has a central role in coupling the hydrolysis of ATP to the transfer of proteins into and across the cell membrane, serving as an ATP-driven molecular motor driving the stepwise translocation of polypeptide chains across the membrane. This chain is Protein translocase subunit SecA, found in Gloeobacter violaceus (strain ATCC 29082 / PCC 7421).